The chain runs to 218 residues: Glutathione S-transferase class-mu 26 kDa isozyme (218 aa).

The 82-residue stretch at 2–83 (SPILGYWKIK…YIADKHNMLG (82 aa)) folds into the GST N-terminal domain. Glutathione-binding positions include 7 to 8 (YW), 41 to 45 (WRNKK), 54 to 55 (NL), and 67 to 68 (QS). Residues 85–203 (CPKERAEISM…KSSKYIAWPL (119 aa)) form the GST C-terminal domain. Y111 contacts substrate.

The protein belongs to the GST superfamily. Mu family. In terms of assembly, homodimer.

It catalyses the reaction RX + glutathione = an S-substituted glutathione + a halide anion + H(+). In terms of biological role, conjugation of reduced glutathione to a wide number of exogenous and endogenous hydrophobic electrophiles. Its function is as follows. GST isoenzymes appear to play a central role in the parasite detoxification system. Other functions are also suspected including a role in increasing the solubility of haematin in the parasite gut. This is Glutathione S-transferase class-mu 26 kDa isozyme from Schistosoma japonicum (Blood fluke).